A 142-amino-acid chain; its full sequence is ATP synthase epsilon chain (142 aa).

Belongs to the ATPase epsilon chain family. F-type ATPases have 2 components, CF(1) - the catalytic core - and CF(0) - the membrane proton channel. CF(1) has five subunits: alpha(3), beta(3), gamma(1), delta(1), epsilon(1). CF(0) has three main subunits: a, b and c.

It localises to the cell inner membrane. Functionally, produces ATP from ADP in the presence of a proton gradient across the membrane. This is ATP synthase epsilon chain from Haemophilus influenzae (strain 86-028NP).